A 160-amino-acid polypeptide reads, in one-letter code: 2-C-methyl-D-erythritol 2,4-cyclodiphosphate synthase (160 aa).

The a divalent metal cation site is built by Asp-11 and His-13. Residues 11–13 (DIH) and 37–38 (HS) each bind 4-CDP-2-C-methyl-D-erythritol 2-phosphate. His-45 contacts a divalent metal cation. 4-CDP-2-C-methyl-D-erythritol 2-phosphate contacts are provided by residues 59-61 (DIG), 135-138 (TTNE), and Arg-145.

The protein belongs to the IspF family. In terms of assembly, homotrimer. The cofactor is a divalent metal cation.

It catalyses the reaction 4-CDP-2-C-methyl-D-erythritol 2-phosphate = 2-C-methyl-D-erythritol 2,4-cyclic diphosphate + CMP. It functions in the pathway isoprenoid biosynthesis; isopentenyl diphosphate biosynthesis via DXP pathway; isopentenyl diphosphate from 1-deoxy-D-xylulose 5-phosphate: step 4/6. In terms of biological role, involved in the biosynthesis of isopentenyl diphosphate (IPP) and dimethylallyl diphosphate (DMAPP), two major building blocks of isoprenoid compounds. Catalyzes the conversion of 4-diphosphocytidyl-2-C-methyl-D-erythritol 2-phosphate (CDP-ME2P) to 2-C-methyl-D-erythritol 2,4-cyclodiphosphate (ME-CPP) with a corresponding release of cytidine 5-monophosphate (CMP). The polypeptide is 2-C-methyl-D-erythritol 2,4-cyclodiphosphate synthase (Synechococcus elongatus (strain ATCC 33912 / PCC 7942 / FACHB-805) (Anacystis nidulans R2)).